A 112-amino-acid polypeptide reads, in one-letter code: MSGVWVFNNGVIRLVENPNQSGGVSTQSHGRRNVLVYLPTGEAVSSYSSLEQILRSLGWERYFSGDSDLIQYHKRSSIDLISLPRDFSKFNSVYMYDIVVKNPNSFHVRDFN.

The protein belongs to the FPF1 family. As to expression, expressed in leaves and in some parts of the flowers, mainly in the sepals.

Functionally, modulates the competence to flowering of apical meristems. The polypeptide is Flowering-promoting factor 1-like protein 2 (FLP2) (Arabidopsis thaliana (Mouse-ear cress)).